A 244-amino-acid polypeptide reads, in one-letter code: Triosephosphate isomerase (244 aa).

9–11 contributes to the substrate binding site; sequence NWK. The active-site Electrophile is His-93. Catalysis depends on Glu-160, which acts as the Proton acceptor. Substrate contacts are provided by Gly-166 and Ser-206.

The protein belongs to the triosephosphate isomerase family. In terms of assembly, homodimer.

Its subcellular location is the cytoplasm. It catalyses the reaction D-glyceraldehyde 3-phosphate = dihydroxyacetone phosphate. It participates in carbohydrate biosynthesis; gluconeogenesis. The protein operates within carbohydrate degradation; glycolysis; D-glyceraldehyde 3-phosphate from glycerone phosphate: step 1/1. Its function is as follows. Involved in the gluconeogenesis. Catalyzes stereospecifically the conversion of dihydroxyacetone phosphate (DHAP) to D-glyceraldehyde-3-phosphate (G3P). In Mycoplasma genitalium (strain ATCC 33530 / DSM 19775 / NCTC 10195 / G37) (Mycoplasmoides genitalium), this protein is Triosephosphate isomerase.